The sequence spans 284 residues: ATP phosphoribosyltransferase (284 aa).

This sequence belongs to the ATP phosphoribosyltransferase family. Long subfamily. In terms of assembly, equilibrium between an active dimeric form, an inactive hexameric form and higher aggregates. Interconversion between the various forms is largely reversible and is influenced by the natural substrates and inhibitors of the enzyme. The cofactor is Mg(2+).

The protein localises to the cytoplasm. The catalysed reaction is 1-(5-phospho-beta-D-ribosyl)-ATP + diphosphate = 5-phospho-alpha-D-ribose 1-diphosphate + ATP. Its pathway is amino-acid biosynthesis; L-histidine biosynthesis; L-histidine from 5-phospho-alpha-D-ribose 1-diphosphate: step 1/9. Feedback inhibited by histidine. In terms of biological role, catalyzes the condensation of ATP and 5-phosphoribose 1-diphosphate to form N'-(5'-phosphoribosyl)-ATP (PR-ATP). Has a crucial role in the pathway because the rate of histidine biosynthesis seems to be controlled primarily by regulation of HisG enzymatic activity. The chain is ATP phosphoribosyltransferase (hisG) from Mycobacterium bovis (strain ATCC BAA-935 / AF2122/97).